Reading from the N-terminus, the 662-residue chain is UPF0313 protein CPF_1407 (662 aa).

A Radical SAM core domain is found at 296–567 (AIEEVKFSIV…AMQRALLQFK (272 aa)). [4Fe-4S] cluster-binding residues include Cys-310, Cys-314, and Cys-317. Residues 596–662 (IRDKNSFGKG…QRSSKGKKRR (67 aa)) are disordered. Residues 618–632 (SRNENSGRRESEDKK) show a composition bias toward basic and acidic residues. A compositionally biased stretch (basic residues) spans 633–644 (RSSHSKKQRGNK).

This sequence belongs to the UPF0313 family. Requires [4Fe-4S] cluster as cofactor.

The chain is UPF0313 protein CPF_1407 from Clostridium perfringens (strain ATCC 13124 / DSM 756 / JCM 1290 / NCIMB 6125 / NCTC 8237 / Type A).